Here is a 596-residue protein sequence, read N- to C-terminus: Interleukin-1 receptor-associated kinase 3 (596 aa).

One can recognise a Death domain in the interval 41–106 (WRGLAERLSS…RAIHLITNYG (66 aa)). Serine 110 is modified (phosphoserine; by IRAK1). A Protein kinase domain is found at 165–452 (FHKDFLIGEG…LESTQASLYF (288 aa)). ATP is bound by residues 171 to 179 (IGEGEIFEV), lysine 192, 295 to 298 (SSAN), and aspartate 311. At serine 467 the chain carries Phosphoserine. The segment at 560-596 (NIDPSSEAPGHSCRSRPVESSCSSKFSWDEYEQYKKE) is disordered.

This sequence belongs to the protein kinase superfamily. TKL Ser/Thr protein kinase family. Pelle subfamily. As to quaternary structure, monomer. Homodimer; disulfide-linked. May interact with IRAK4 (when phosphorylated). Interacts (when phosphorylated at Ser-110) with PIN1 (via WW domain) in response to IL33-mediated (but not TLR4 ligand LPS) dendritic cell stimulation. In terms of tissue distribution, expressed in eosinophils, dendritic cells and/or monocytes (at protein level). Expressed predominantly in peripheral blood lymphocytes.

Its subcellular location is the cytoplasm. It is found in the nucleus. In terms of biological role, putative inactive protein kinase which regulates signaling downstream of immune receptors including IL1R and Toll-like receptors. Inhibits dissociation of IRAK1 and IRAK4 from the Toll-like receptor signaling complex by either inhibiting the phosphorylation of IRAK1 and IRAK4 or stabilizing the receptor complex. Upon IL33-induced lung inflammation, positively regulates expression of IL6, CSF3, CXCL2 and CCL5 mRNAs in dendritic cells. In Homo sapiens (Human), this protein is Interleukin-1 receptor-associated kinase 3.